Consider the following 157-residue polypeptide: S-ribosylhomocysteine lyase (157 aa).

Residues His54, His58, and Cys126 each contribute to the Fe cation site.

Belongs to the LuxS family. In terms of assembly, homodimer. Fe cation serves as cofactor.

It carries out the reaction S-(5-deoxy-D-ribos-5-yl)-L-homocysteine = (S)-4,5-dihydroxypentane-2,3-dione + L-homocysteine. In terms of biological role, involved in the synthesis of autoinducer 2 (AI-2) which is secreted by bacteria and is used to communicate both the cell density and the metabolic potential of the environment. The regulation of gene expression in response to changes in cell density is called quorum sensing. Catalyzes the transformation of S-ribosylhomocysteine (RHC) to homocysteine (HC) and 4,5-dihydroxy-2,3-pentadione (DPD). This is S-ribosylhomocysteine lyase from Bacillus cereus (strain 03BB102).